Reading from the N-terminus, the 395-residue chain is Leukosialin (395 aa).

The signal sequence occupies residues 1-19; that stretch reads MALHLLLLFGACWVQVASP. Topologically, residues 20–248 are extracellular; it reads DSLQRTTMLP…TRSPSQESSG (229 aa). The span at 27–56 shows a compositional bias: polar residues; sequence MLPSTPHITAPSTSEAQNASPSVSVGSGTV. The interval 27-245 is disordered; the sequence is MLPSTPHITA…PITTRSPSQE (219 aa). The span at 73 to 88 shows a compositional bias: low complexity; that stretch reads SLTPLETTELSSLETS. 2 stretches are compositionally biased toward polar residues: residues 89 to 111 and 145 to 154; these read AGAS…SKTS and TAASTSISKG. Positions 155–166 are enriched in low complexity; sequence TSAPPTTVTTSS. Asn-167 carries an N-linked (GlcNAc...) asparagine glycan. The segment covering 167–196 has biased composition (polar residues); sequence NETSGPSVATTVSSKTSGPPVTTATGSLGP. Low complexity predominate over residues 205 to 241; it reads ATTATSSVESSSVARGTSVSSRKTSTTSTQDPITTRS. The chain crosses the membrane as a helical span at residues 249-271; the sequence is MLLVPMLIALVVVLALVALLLLW. The tract at residues 272–302 is required for interaction with EZR, MSN and RDX and for co-localization to microvilli; sequence RQRQKRRTGALTLSGGGKRNGVVDAWAGPAR. Residues 272 to 395 are Cytoplasmic-facing; it reads RQRQKRRTGA…AKDEAAPQSL (124 aa). A Nuclear localization signal motif is present at residues 276–290; the sequence is KRRTGALTLSGGGKR. Ser-285 and Ser-328 each carry phosphoserine. The tract at residues 303–395 is disordered; it reads VPDEEATTTS…AKDEAAPQSL (93 aa). Polar residues predominate over residues 327–338; the sequence is GSGQRPTLTTFF. At Thr-333 the chain carries Phosphothreonine. Ser-339 and Ser-343 each carry phosphoserine. Ser-347 carries the post-translational modification Phosphoserine; by PKC/PRKCQ. Ser-371 carries the phosphoserine modification. Thr-378 carries the phosphothreonine modification. Positions 385–395 are enriched in basic and acidic residues; it reads QAKDEAAPQSL.

As to quaternary structure, interacts with SIGLEC1. In terms of assembly, interacts with isoform 2 of HIPK2. Interacts with CTNNB1. Interacts with RDX (via FERM domain). Interacts with EZR. Interacts with MSN. Post-translationally, phosphorylation at Ser-347 is regulated by chemokines, requires its association with ERM proteins (EZR, RDX and MSN) and is essential for its function in the regulation of T-cell trafficking to lymph nodes. In terms of processing, has a high content of sialic acid and O-linked carbohydrate structures. Cleavage by CTSG releases its extracellular domain and triggers its intramembrane proteolysis by gamma-secretase releasing the CD43 cytoplasmic tail chain (CD43-ct) which translocates to the nucleus. Post-translationally, sumoylated. In terms of tissue distribution, cell surface of thymocytes, T-lymphocytes, neutrophils, plasma cells and myelomas.

Its subcellular location is the membrane. It is found in the cell projection. The protein resides in the microvillus. It localises to the uropodium. The protein localises to the nucleus. Its subcellular location is the PML body. Functionally, predominant cell surface sialoprotein of leukocytes which regulates multiple T-cell functions, including T-cell activation, proliferation, differentiation, trafficking and migration. Positively regulates T-cell trafficking to lymph-nodes via its association with ERM proteins (EZR, RDX and MSN). Negatively regulates Th2 cell differentiation and predisposes the differentiation of T-cells towards a Th1 lineage commitment. Promotes the expression of IFN-gamma by T-cells during T-cell receptor (TCR) activation of naive cells and induces the expression of IFN-gamma by CD4(+) T-cells and to a lesser extent by CD8(+) T-cells. Plays a role in preparing T-cells for cytokine sensing and differentiation into effector cells by inducing the expression of cytokine receptors IFNGR and IL4R, promoting IFNGR and IL4R signaling and by mediating the clustering of IFNGR with TCR. Acts as a major E-selectin ligand responsible for Th17 cell rolling on activated vasculature and recruitment during inflammation. Mediates Th17 cells, but not Th1 cells, adhesion to E-selectin. Acts as a T-cell counter-receptor for SIGLEC1. Its function is as follows. Protects cells from apoptotic signals, promoting cell survival. The protein is Leukosialin (Spn) of Mus musculus (Mouse).